We begin with the raw amino-acid sequence, 198 residues long: Small ribosomal subunit protein uS2 (198 aa).

This sequence belongs to the universal ribosomal protein uS2 family.

The sequence is that of Small ribosomal subunit protein uS2 (rps2) from Methanothermobacter thermautotrophicus (strain ATCC 29096 / DSM 1053 / JCM 10044 / NBRC 100330 / Delta H) (Methanobacterium thermoautotrophicum).